The sequence spans 542 residues: Formate--tetrahydrofolate ligase (542 aa).

53–60 (TPAGEGKT) is a binding site for ATP.

It belongs to the formate--tetrahydrofolate ligase family.

The enzyme catalyses (6S)-5,6,7,8-tetrahydrofolate + formate + ATP = (6R)-10-formyltetrahydrofolate + ADP + phosphate. Its pathway is one-carbon metabolism; tetrahydrofolate interconversion. The protein is Formate--tetrahydrofolate ligase of Thermotoga maritima (strain ATCC 43589 / DSM 3109 / JCM 10099 / NBRC 100826 / MSB8).